The primary structure comprises 149 residues: MADQLTDDQISEFKEAFSLFDKDGDGCITTKELGTVMRSLGQNPTEAELQDMINEVDADGNGTIDFPEPLNLMARKMKDTDSEEELKEAFRVFDKDQNGFISAAELRHVMTNLGEKLTDEEVDEMIREADVDGDGQINYEEFVKVMMAK.

Position 2 is an N-acetylalanine (A2). EF-hand domains are found at residues 8–43, 44–79, 81–116, and 117–149; these read DQISEFKEAFSLFDKDGDGCITTKELGTVMRSLGQN, PTEAELQDMINEVDADGNGTIDFPEPLNLMARKMKD, DSEEELKEAFRVFDKDQNGFISAAELRHVMTNLGEK, and LTDEEVDEMIREADVDGDGQINYEEFVKVMMAK. Ca(2+)-binding residues include D21, D23, D25, C27, E32, D57, D59, N61, T63, E68, D94, D96, N98, and E105. At K116 the chain carries N6,N6,N6-trimethyllysine. Positions 130, 132, 134, 136, and 141 each coordinate Ca(2+).

This sequence belongs to the calmodulin family.

In terms of biological role, calmodulin mediates the control of a large number of enzymes, ion channels and other proteins by Ca(2+). Among the enzymes to be stimulated by the calmodulin-Ca(2+) complex are a number of protein kinases and phosphatases. The chain is Calmodulin (CAM) from Malus domestica (Apple).